Here is a 172-residue protein sequence, read N- to C-terminus: Large ribosomal subunit protein uL10 (172 aa).

It belongs to the universal ribosomal protein uL10 family. In terms of assembly, part of the ribosomal stalk of the 50S ribosomal subunit. The N-terminus interacts with L11 and the large rRNA to form the base of the stalk. The C-terminus forms an elongated spine to which L12 dimers bind in a sequential fashion forming a multimeric L10(L12)X complex.

Forms part of the ribosomal stalk, playing a central role in the interaction of the ribosome with GTP-bound translation factors. The chain is Large ribosomal subunit protein uL10 from Rhodopseudomonas palustris (strain HaA2).